We begin with the raw amino-acid sequence, 375 residues long: Protein RecA (375 aa).

The interval 1-20 (MPAEMKSAASGSDPRSSGER) is disordered. An ATP-binding site is contributed by 79-86 (GPESSGKT).

The protein belongs to the RecA family.

The protein localises to the cytoplasm. In terms of biological role, can catalyze the hydrolysis of ATP in the presence of single-stranded DNA, the ATP-dependent uptake of single-stranded DNA by duplex DNA, and the ATP-dependent hybridization of homologous single-stranded DNAs. It interacts with LexA causing its activation and leading to its autocatalytic cleavage. The polypeptide is Protein RecA (Parasynechococcus marenigrum (strain WH8102)).